Consider the following 496-residue polypeptide: MARFVVAGASEYLAITGWGIDDVKLAKKAWVFAGQKCLKFDATPVSYDIDVQAMSSEKLPFRLPAAYTIGPSPKIKRNPVVDGPAPPADTQRRLEDCDEEALLLYAKLIAASQIRSPNHVIDLVKGVIEGETRVLASSMTMEEIFQGTKKFKQQVFDQVQLALNELGLYIYSANVKQLVDDPDSPGNDYFSFLGQKRQAEVEGKAKVAEAEARMKGEIGAKEREGLTLQNAAKVDAETKVLSARQQGVGCREEIKVKADVEVYENEREADIAAARAALAVKKAGLDKQSKVAEVEAVKAVVVREAELQLEVERKNALRLTEKLKAEKLSKATVQYETQVQDSNAALYDRQMAADATLFEQVKSAEARKAQAGAKFFEQKLAEDARLYARQREAEALAGVGRAKAELVASMLQELGGDHGALRDSLMIDGGVYEEVARVNASAMSGIQPKISIRSRAGGANAGASSAGAVQQVAAADVYDMLPPFLQSSGGFNKLPL.

C37 carries S-palmitoyl cysteine lipidation. Positions 301–328 (VVREAELQLEVERKNALRLTEKLKAEKL) form a coiled coil.

This sequence belongs to the band 7/mec-2 family. Flotillin subfamily. Post-translationally, may be palmitoylated.

The protein localises to the cell membrane. It localises to the membrane. The protein resides in the caveola. Functionally, may act as a scaffolding protein within caveolar membranes, functionally participating in formation of caveolae or caveolae-like vesicles. The sequence is that of Flotillin-like protein 3 (FLOT3) from Oryza sativa subsp. japonica (Rice).